The chain runs to 196 residues: Alpha-crystallin A chain (196 aa).

Methionine 1 carries the post-translational modification N-acetylmethionine. The tract at residues 1-63 (MDVTIQHPWF…RTVLDSGISE (63 aa)) is required for complex formation with BFSP1 and BFSP2. Glutamine 6 bears the Deamidated glutamine; partial mark. Serine 45 is modified (phosphoserine). Glutamine 50 carries the post-translational modification Deamidated glutamine; partial. A sHSP domain is found at 76 to 185 (HAGNPKNNPV…GHSERAIPVS (110 aa)). Residues lysine 93 and lysine 122 each carry the N6-acetyllysine modification. Histidine 123 contacts Zn(2+). At asparagine 124 the chain carries Deamidated asparagine; partial. Residues glutamate 125 and histidine 130 each coordinate Zn(2+). Phosphoserine is present on serine 145. Asparagine 146 is subject to Deamidated asparagine; partial. The disordered stretch occupies residues 168–196 (KVQSGLDAGHSERAIPVSREEKPSSAPSS). Glutamine 170 is subject to Deamidated glutamine; partial. Over residues 176-190 (GHSERAIPVSREEKP) the composition is skewed to basic and acidic residues. Position 177 (histidine 177) interacts with Zn(2+). O-linked (GlcNAc) serine glycosylation is present at serine 185.

It belongs to the small heat shock protein (HSP20) family. In terms of assembly, heteropolymer composed of three CRYAA and one CRYAB subunits. Inter-subunit bridging via zinc ions enhances stability, which is crucial as there is no protein turn over in the lens. Can also form homodimers and homotetramers (dimers of dimers) which serve as the building blocks of homooligomers. Within homooligomers, the zinc-binding motif is created from residues of 3 different molecules. His-123 and Glu-125 from one molecule are ligands of the zinc ion, and His-130 and His-177 residues from additional molecules complete the site with tetrahedral coordination geometry. Part of a complex required for lens intermediate filament formation composed of BFSP1, BFSP2 and CRYAA. Post-translationally, acetylation at Lys-93 may increase chaperone activity. In terms of processing, undergoes age-dependent proteolytical cleavage at the C-terminus.

It localises to the cytoplasm. It is found in the nucleus. Functionally, contributes to the transparency and refractive index of the lens. Acts as a chaperone, preventing aggregation of various proteins under a wide range of stress conditions. Required for the correct formation of lens intermediate filaments as part of a complex composed of BFSP1, BFSP2 and CRYAA. This is Alpha-crystallin A chain (Cryaa) from Mus musculus (Mouse).